The sequence spans 354 residues: tRNA dimethylallyltransferase (354 aa).

28 to 35 (GPTATGKS) lines the ATP pocket. 30–35 (TATGKS) provides a ligand contact to substrate. An interaction with substrate tRNA region spans residues 53–56 (DSRQ).

This sequence belongs to the IPP transferase family. As to quaternary structure, monomer. It depends on Mg(2+) as a cofactor.

It catalyses the reaction adenosine(37) in tRNA + dimethylallyl diphosphate = N(6)-dimethylallyladenosine(37) in tRNA + diphosphate. In terms of biological role, catalyzes the transfer of a dimethylallyl group onto the adenine at position 37 in tRNAs that read codons beginning with uridine, leading to the formation of N6-(dimethylallyl)adenosine (i(6)A). The chain is tRNA dimethylallyltransferase from Synechococcus sp. (strain JA-2-3B'a(2-13)) (Cyanobacteria bacterium Yellowstone B-Prime).